The chain runs to 359 residues: Probable cinnamyl alcohol dehydrogenase 8A (359 aa).

A Zn(2+)-binding site is contributed by Cys-45. Thr-47 contributes to the NADP(+) binding site. Residues His-67, Glu-68, Cys-98, Cys-101, Cys-104, Cys-112, and Cys-161 each contribute to the Zn(2+) site. Residues Thr-165, 186–191, 209–214, Thr-249, Gly-273, and 296–298 each bind NADP(+); these read GLGGLG, SSSPAK, and SGG.

This sequence belongs to the zinc-containing alcohol dehydrogenase family. Homodimer. Requires Zn(2+) as cofactor.

The catalysed reaction is (E)-cinnamyl alcohol + NADP(+) = (E)-cinnamaldehyde + NADPH + H(+). The enzyme catalyses (E)-coniferol + NADP(+) = (E)-coniferaldehyde + NADPH + H(+). It catalyses the reaction (E)-sinapyl alcohol + NADP(+) = (E)-sinapaldehyde + NADPH + H(+). It carries out the reaction (E)-4-coumaroyl alcohol + NADP(+) = (E)-4-coumaraldehyde + NADPH + H(+). The catalysed reaction is (E)-caffeyl alcohol + NADP(+) = (E)-caffeyl aldehyde + NADPH + H(+). The protein operates within aromatic compound metabolism; phenylpropanoid biosynthesis. Functionally, involved in lignin biosynthesis. Catalyzes the final step specific for the production of lignin monomers. Catalyzes the NADPH-dependent reduction of coniferaldehyde, 5-hydroxyconiferaldehyde, sinapaldehyde, 4-coumaraldehyde and caffeyl aldehyde to their respective alcohols. The protein is Probable cinnamyl alcohol dehydrogenase 8A of Oryza sativa subsp. japonica (Rice).